The sequence spans 242 residues: Probable septum site-determining protein MinC (242 aa).

Belongs to the MinC family. In terms of assembly, interacts with MinD and FtsZ.

Its function is as follows. Cell division inhibitor that blocks the formation of polar Z ring septums. Rapidly oscillates between the poles of the cell to destabilize FtsZ filaments that have formed before they mature into polar Z rings. Prevents FtsZ polymerization. This is Probable septum site-determining protein MinC from Agrobacterium fabrum (strain C58 / ATCC 33970) (Agrobacterium tumefaciens (strain C58)).